Reading from the N-terminus, the 134-residue chain is MKDWLDEIHWNADGLVPAIAQDHETGRVLMMAWMNREALALTASENRAIYWSRSRGKLWRKGEESGHVQKLHELRLDCDADVVILMVEQVGGIACHTGRESCFYRVFENGAWKTVDPVLKDPDAIYEHAGHHHE.

Mg(2+) is bound at residue Asp77. Cys78 serves as a coordination point for Zn(2+). Mg(2+) is bound by residues Asp79 and Asp81. Residues Cys95 and Cys102 each coordinate Zn(2+).

It belongs to the PRA-CH family. Homodimer. It depends on Mg(2+) as a cofactor. The cofactor is Zn(2+).

It is found in the cytoplasm. The catalysed reaction is 1-(5-phospho-beta-D-ribosyl)-5'-AMP + H2O = 1-(5-phospho-beta-D-ribosyl)-5-[(5-phospho-beta-D-ribosylamino)methylideneamino]imidazole-4-carboxamide. Its pathway is amino-acid biosynthesis; L-histidine biosynthesis; L-histidine from 5-phospho-alpha-D-ribose 1-diphosphate: step 3/9. Catalyzes the hydrolysis of the adenine ring of phosphoribosyl-AMP. This Pseudomonas aeruginosa (strain LESB58) protein is Phosphoribosyl-AMP cyclohydrolase.